We begin with the raw amino-acid sequence, 137 residues long: ATP synthase epsilon chain (137 aa).

The protein belongs to the ATPase epsilon chain family. F-type ATPases have 2 components, CF(1) - the catalytic core - and CF(0) - the membrane proton channel. CF(1) has five subunits: alpha(3), beta(3), gamma(1), delta(1), epsilon(1). CF(0) has three main subunits: a, b and c.

It localises to the cell membrane. In terms of biological role, produces ATP from ADP in the presence of a proton gradient across the membrane. The polypeptide is ATP synthase epsilon chain (Thermobifida fusca (strain YX)).